The chain runs to 282 residues: Undecaprenyl-diphosphatase (282 aa).

Helical transmembrane passes span 2 to 22 (FDFI…FLPV), 47 to 67 (FTAV…IQLY), 90 to 110 (WIKV…LNNF), 115 to 135 (LLNP…FIVI), 152 to 172 (ITFK…VPGT), 190 to 210 (FVAA…VTIL), 225 to 245 (AQLF…LFAI), and 259 to 279 (IFGW…IAGL).

The protein belongs to the UppP family.

Its subcellular location is the cell membrane. It catalyses the reaction di-trans,octa-cis-undecaprenyl diphosphate + H2O = di-trans,octa-cis-undecaprenyl phosphate + phosphate + H(+). Functionally, catalyzes the dephosphorylation of undecaprenyl diphosphate (UPP). Confers resistance to bacitracin. In Leuconostoc citreum (strain KM20), this protein is Undecaprenyl-diphosphatase.